We begin with the raw amino-acid sequence, 906 residues long: Ectonucleotide pyrophosphatase/phosphodiesterase family member 1 (906 aa).

The disordered stretch occupies residues 1-22 (MERDGDQAGHGPRHGSAGNGRE). Residues 1–58 (MERDGDQAGHGPRHGSAGNGRELESPAAASLLAPMDLGEEPLEKAERARPAKDPNTYK) are Cytoplasmic-facing. At Ser25 the chain carries Phosphoserine. The short motif at 27–34 (AAASLLAP) is the Di-leucine motif element. The helical; Signal-anchor for type II membrane protein transmembrane segment at 59–79 (VLSLVLSVCVLTTILGCIFGL) threads the bilayer. At 80-906 (KPSCAKEVKS…THLPIFSQED (827 aa)) the chain is on the extracellular side. SMB domains follow at residues 86 to 126 (EVKS…VEPT) and 127 to 171 (HIWT…DKKS). 10 disulfides stabilise this stretch: Cys90/Cys104, Cys94/Cys122, Cys102/Cys115, Cys108/Cys114, Cys131/Cys148, Cys136/Cys166, Cys146/Cys159, Cys152/Cys158, Cys177/Cys223, and Cys185/Cys397. A glycan (N-linked (GlcNAc...) asparagine) is linked at Asn161. The segment at 173–573 (VEETCESIDT…APNNGSHGSL (401 aa)) is phosphodiesterase. AMP is bound by residues Asp200, Thr238, and Asn259. Residues Asp200 and Thr238 each coordinate Zn(2+). Thr238 functions as the AMP-threonine intermediate in the catalytic mechanism. Positions 238 and 259 each coordinate CMP. The dTMP site is built by Thr238 and Asn259. GMP contacts are provided by Thr238 and Asn259. Thr238 is subject to Phosphothreonine. N-linked (GlcNAc...) asparagine glycosylation occurs at Asn267. GMP-binding residues include Leu272, Lys277, and Tyr322. AMP contacts are provided by Lys277 and Tyr322. Residues Lys277 and Tyr322 each contribute to the CMP site. Tyr322 is a dTMP binding site. N-linked (GlcNAc...) asparagine glycosylation is present at Asn323. Position 358 (Asp358) interacts with AMP. Residues Asp358, His362, Asp405, and His406 each coordinate Zn(2+). Position 358 (Asp358) interacts with CMP. Asp358 contributes to the dTMP binding site. Asp358 is a binding site for GMP. His362 lines the 2',3'-cGAMP pocket. AMP is bound at residue His406. Residue His406 coordinates CMP. DTMP is bound at residue His406. A GMP-binding site is contributed by His406. 6 cysteine pairs are disulfide-bonded: Cys413-Cys512, Cys462-Cys849, Cys596-Cys653, Cys607-Cys707, Cys609-Cys692, and Cys819-Cys829. The N-linked (GlcNAc...) asparagine glycan is linked to Asn459. Ser514 is a binding site for 2',3'-cGAMP. His517 lines the AMP pocket. His517 is a Zn(2+) binding site. Residue His517 participates in CMP binding. His517 is a binding site for dTMP. His517 lines the GMP pocket. 2 N-linked (GlcNAc...) asparagine glycosylation sites follow: Asn567 and Asn624. A linker region spans residues 579 to 628 (KPIYNPSHPKEEGFLSQCPIKSTSNDLGCTCDPWIVPIKDFEKQLNLTTE). Positions 635–906 (HMTVPYGRPR…THLPIFSQED (272 aa)) are nuclease-like domain. Asp781, Asp783, Asp785, Arg787, and Asp789 together coordinate Ca(2+).

The protein belongs to the nucleotide pyrophosphatase/phosphodiesterase family. In terms of assembly, ectonucleotide pyrophosphatase/phosphodiesterase family member 1: Homodimer. Ectonucleotide pyrophosphatase/phosphodiesterase family member 1: Interacts with INSR; leading to inhibit INSR autophosphorylation and subsequent activation of INSR kinase activity. Ectonucleotide pyrophosphatase/phosphodiesterase family member 1, secreted form: Monomeric. Requires Zn(2+) as cofactor. Post-translationally, N-glycosylated. The secreted form is produced through cleavage at Lys-85 by intracellular processing. As to expression, selectively expressed on the surface of antibody-secreting cells. Expressed in osteocytes and osteoclasts.

It localises to the cell membrane. The protein localises to the basolateral cell membrane. The protein resides in the secreted. The catalysed reaction is Hydrolytically removes 5'-nucleotides successively from the 3'-hydroxy termini of 3'-hydroxy-terminated oligonucleotides.. It carries out the reaction a ribonucleoside 5'-triphosphate + H2O = a ribonucleoside 5'-phosphate + diphosphate + H(+). The enzyme catalyses ATP + H2O = AMP + diphosphate + H(+). It catalyses the reaction UTP + H2O = UMP + diphosphate + H(+). The catalysed reaction is GTP + H2O = GMP + diphosphate + H(+). It carries out the reaction CTP + H2O = CMP + diphosphate + H(+). The enzyme catalyses 2',3'-cGAMP + 2 H2O = GMP + AMP + 2 H(+). It catalyses the reaction P(1),P(4)-bis(5'-adenosyl) tetraphosphate + H2O = AMP + ATP + 2 H(+). The catalysed reaction is 3',5'-cyclic AMP + H2O = AMP + H(+). Its activity is regulated as follows. At low concentrations of ATP, a phosphorylated intermediate is formed which inhibits further hydrolysis. Its function is as follows. Nucleotide pyrophosphatase that generates diphosphate (PPi) and functions in bone mineralization and soft tissue calcification by regulating pyrophosphate levels. PPi inhibits bone mineralization and soft tissue calcification by binding to nascent hydroxyapatite crystals, thereby preventing further growth of these crystals. Preferentially hydrolyzes ATP, but can also hydrolyze other nucleoside 5' triphosphates such as GTP, CTP and UTP to their corresponding monophosphates with release of pyrophosphate, as well as diadenosine polyphosphates, and also 3',5'-cAMP to AMP. May also be involved in the regulation of the availability of nucleotide sugars in the endoplasmic reticulum and Golgi, and the regulation of purinergic signaling. Inhibits ectopic joint calcification and maintains articular chondrocytes by repressing hedgehog signaling; it is however unclear whether hedgehog inhibition is direct or indirect. Appears to modulate insulin sensitivity. Also involved in melanogenesis. Also able to hydrolyze 2',3'-cGAMP (cyclic GMP-AMP), a second messenger that activates TMEM173/STING and triggers type-I interferon production. 2',3'-cGAMP degradation takes place in the lumen or extracellular space, and not in the cytosol where it is produced; the role of 2',3'-cGAMP hydrolysis is therefore unclear. Not able to hydrolyze the 2',3'-cGAMP linkage isomer 3',3'-cGAMP. This is Ectonucleotide pyrophosphatase/phosphodiesterase family member 1 from Mus musculus (Mouse).